The sequence spans 360 residues: Protein Wnt-2 (360 aa).

An N-terminal signal peptide occupies residues 1–25 (MNAPLGGIWLWLPLLLTWLTPEVNS). Intrachain disulfides connect Cys-76–Cys-87, Cys-127–Cys-135, Cys-137–Cys-157, Cys-206–Cys-220, Cys-208–Cys-215, Cys-278–Cys-309, Cys-294–Cys-304, Cys-308–Cys-348, Cys-324–Cys-339, Cys-326–Cys-336, and Cys-331–Cys-332. The O-palmitoleoyl serine; by PORCN moiety is linked to residue Ser-212. Residue Asn-295 is glycosylated (N-linked (GlcNAc...) asparagine).

This sequence belongs to the Wnt family. Post-translationally, palmitoleoylation is required for efficient binding to frizzled receptors. Depalmitoleoylation leads to Wnt signaling pathway inhibition.

Its subcellular location is the secreted. It is found in the extracellular space. It localises to the extracellular matrix. Functionally, ligand for members of the frizzled family of seven transmembrane receptors. Functions in the canonical Wnt signaling pathway that results in activation of transcription factors of the TCF/LEF family. Functions as a upstream regulator of FGF10 expression. Plays an important role in embryonic lung development. May contribute to embryonic brain development by regulating the proliferation of dopaminergic precursors and neurons. This Nomascus leucogenys (Northern white-cheeked gibbon) protein is Protein Wnt-2 (WNT2).